The following is a 189-amino-acid chain: Gluconokinase (189 aa).

Gly-16 to Ser-23 lines the ATP pocket.

This sequence belongs to the gluconokinase GntK/GntV family. Monomer.

It catalyses the reaction D-gluconate + ATP = 6-phospho-D-gluconate + ADP + H(+). The protein operates within carbohydrate acid metabolism; D-gluconate degradation. In terms of biological role, phosphorylates gluconate to 6-phosphogluconate. In Arabidopsis thaliana (Mouse-ear cress), this protein is Gluconokinase.